Consider the following 179-residue polypeptide: Large ribosomal subunit protein uL6 (179 aa).

Belongs to the universal ribosomal protein uL6 family. Part of the 50S ribosomal subunit.

Functionally, this protein binds to the 23S rRNA, and is important in its secondary structure. It is located near the subunit interface in the base of the L7/L12 stalk, and near the tRNA binding site of the peptidyltransferase center. This Methylacidiphilum infernorum (isolate V4) (Methylokorus infernorum (strain V4)) protein is Large ribosomal subunit protein uL6.